The sequence spans 302 residues: Sulfate adenylyltransferase subunit 2 (302 aa).

Belongs to the PAPS reductase family. CysD subfamily. As to quaternary structure, heterodimer composed of CysD, the smaller subunit, and CysN.

The catalysed reaction is sulfate + ATP + H(+) = adenosine 5'-phosphosulfate + diphosphate. It functions in the pathway sulfur metabolism; hydrogen sulfide biosynthesis; sulfite from sulfate: step 1/3. With CysN forms the ATP sulfurylase (ATPS) that catalyzes the adenylation of sulfate producing adenosine 5'-phosphosulfate (APS) and diphosphate, the first enzymatic step in sulfur assimilation pathway. APS synthesis involves the formation of a high-energy phosphoric-sulfuric acid anhydride bond driven by GTP hydrolysis by CysN coupled to ATP hydrolysis by CysD. This Xanthomonas euvesicatoria pv. vesicatoria (strain 85-10) (Xanthomonas campestris pv. vesicatoria) protein is Sulfate adenylyltransferase subunit 2.